We begin with the raw amino-acid sequence, 131 residues long: Large ribosomal subunit protein bL12 (131 aa).

Belongs to the bacterial ribosomal protein bL12 family. Homodimer. Part of the ribosomal stalk of the 50S ribosomal subunit. Forms a multimeric L10(L12)X complex, where L10 forms an elongated spine to which 2 to 4 L12 dimers bind in a sequential fashion. Binds GTP-bound translation factors.

Forms part of the ribosomal stalk which helps the ribosome interact with GTP-bound translation factors. Is thus essential for accurate translation. In Prochlorococcus marinus subsp. pastoris (strain CCMP1986 / NIES-2087 / MED4), this protein is Large ribosomal subunit protein bL12.